We begin with the raw amino-acid sequence, 95 residues long: Protein TusB (95 aa).

It belongs to the DsrH/TusB family. As to quaternary structure, heterohexamer, formed by a dimer of trimers. The hexameric TusBCD complex contains 2 copies each of TusB, TusC and TusD. The TusBCD complex interacts with TusE.

It localises to the cytoplasm. Its function is as follows. Part of a sulfur-relay system required for 2-thiolation of 5-methylaminomethyl-2-thiouridine (mnm(5)s(2)U) at tRNA wobble positions. This chain is Protein TusB, found in Buchnera aphidicola subsp. Schizaphis graminum (strain Sg).